Consider the following 765-residue polypeptide: E3 ubiquitin-protein ligase SlrP (765 aa).

Positions 1-451 (MFNITNIQST…VDYQGPRVLF (451 aa)) are interaction with target proteins. 10 LRR repeats span residues 200-219 (QITT…ENLQ), 221-242 (NIKT…LPDT), 243-262 (IQEM…RLPS), 263-284 (ALQS…LPEE), 285-305 (LRYL…LPSG), 306-325 (ITHL…TLPP), 326-346 (GLKT…SLPP), 347-368 (ELQV…LPPT), 369-389 (ITTL…LPAA), and 390-410 (LQIM…LPHF). Residues 452–461 (AMGDFSIVRV) are linker. The tract at residues 462–765 (TRPLHQAVQG…VSSLMSAYWR (304 aa)) is E3 ubiquitin-protein ligase catalytic domain. The 295-residue stretch at 464 to 758 (PLHQAVQGWL…NILLKKEVSS (295 aa)) folds into the NEL domain. Cys546 serves as the catalytic Glycyl thioester intermediate.

Belongs to the LRR-containing bacterial E3 ligase family. In terms of assembly, interacts with host TXN. Ubiquitinated in the presence of host E1 ubiquitin-activating enzyme, E2 ubiquitin-conjugating enzyme and ubiquitin.

It localises to the secreted. The protein localises to the host cytoplasm. It carries out the reaction S-ubiquitinyl-[E2 ubiquitin-conjugating enzyme]-L-cysteine + [acceptor protein]-L-lysine = [E2 ubiquitin-conjugating enzyme]-L-cysteine + N(6)-ubiquitinyl-[acceptor protein]-L-lysine.. Its activity is regulated as follows. Binding to TXN is inhibited by hydrogen peroxide in vitro. Its function is as follows. Effector proteins function to alter host cell physiology and promote bacterial survival in host tissues. This protein is an E3 ubiquitin ligase that interferes with host's ubiquitination pathway. Can ubiquitinate both ubiquitin and host TXN (thioredoxin). Leads to significant decrease of thioredoxin activity and increase of host cell death. The protein is E3 ubiquitin-protein ligase SlrP (slrP) of Salmonella typhimurium (strain LT2 / SGSC1412 / ATCC 700720).